The sequence spans 272 residues: Proteasome subunit beta type-5 (272 aa).

Positions 1 to 55 are cleaved as a propeptide — removed in mature form; that stretch reads MKLDTSGLESTAPIFRRSDFVFDGLQMTPSFDLPNPTDFDGFQKEAVQMVKPAKG. Catalysis depends on threonine 56, which acts as the Nucleophile.

It belongs to the peptidase T1B family. The 26S proteasome consists of a 20S proteasome core and two 19S regulatory subunits. The 20S proteasome core is composed of 28 subunits that are arranged in four stacked rings, resulting in a barrel-shaped structure. The two end rings are each formed by seven alpha subunits, and the two central rings are each formed by seven beta subunits. The catalytic chamber with the active sites is on the inside of the barrel.

It is found in the cytoplasm. The protein resides in the nucleus. The catalysed reaction is Cleavage of peptide bonds with very broad specificity.. Functionally, the proteasome is a multicatalytic proteinase complex which is characterized by its ability to cleave peptides with Arg, Phe, Tyr, Leu, and Glu adjacent to the leaving group at neutral or slightly basic pH. The proteasome has an ATP-dependent proteolytic activity. This is Proteasome subunit beta type-5 from Spinacia oleracea (Spinach).